Here is a 346-residue protein sequence, read N- to C-terminus: tRNA pseudouridine synthase D (346 aa).

Asp-83 acts as the Nucleophile in catalysis. One can recognise a TRUD domain in the interval 159–305 (GVPNYFGEQR…LKQERRALRV (147 aa)).

This sequence belongs to the pseudouridine synthase TruD family.

The catalysed reaction is uridine(13) in tRNA = pseudouridine(13) in tRNA. In terms of biological role, responsible for synthesis of pseudouridine from uracil-13 in transfer RNAs. The chain is tRNA pseudouridine synthase D from Hydrogenovibrio crunogenus (strain DSM 25203 / XCL-2) (Thiomicrospira crunogena).